Consider the following 334-residue polypeptide: Glycerol-3-phosphate dehydrogenase [NAD(P)+] (334 aa).

NADPH-binding residues include tryptophan 13, arginine 33, and lysine 106. Lysine 106, glycine 137, and serine 139 together coordinate sn-glycerol 3-phosphate. An NADPH-binding site is contributed by alanine 141. The sn-glycerol 3-phosphate site is built by lysine 192, aspartate 245, serine 255, arginine 256, and asparagine 257. Lysine 192 functions as the Proton acceptor in the catalytic mechanism. Arginine 256 is a binding site for NADPH. Valine 280 and glutamate 282 together coordinate NADPH.

This sequence belongs to the NAD-dependent glycerol-3-phosphate dehydrogenase family.

The protein resides in the cytoplasm. It carries out the reaction sn-glycerol 3-phosphate + NAD(+) = dihydroxyacetone phosphate + NADH + H(+). The enzyme catalyses sn-glycerol 3-phosphate + NADP(+) = dihydroxyacetone phosphate + NADPH + H(+). Its pathway is membrane lipid metabolism; glycerophospholipid metabolism. Its function is as follows. Catalyzes the reduction of the glycolytic intermediate dihydroxyacetone phosphate (DHAP) to sn-glycerol 3-phosphate (G3P), the key precursor for phospholipid synthesis. The chain is Glycerol-3-phosphate dehydrogenase [NAD(P)+] from Chlamydia trachomatis serovar L2b (strain UCH-1/proctitis).